A 183-amino-acid polypeptide reads, in one-letter code: MRLLSFVVLALFAVTQAEEGARLLASKSLLNRYAVEGRDLTLQYNIYNVGSSAALDVELSDDSFPPEDFGIVSGMLNVKWDRIAPASNVSHTVVLRPLKAGYFNFTSATITYLAQEDGPVVIGSTSAPGQGGILAQREFDRRFSPHFLDWAAFGVMTLPSIGIPLLLWYSSKRKYDTPKTKKN.

Positions 1–17 (MRLLSFVVLALFAVTQA) are cleaved as a signal peptide. Topologically, residues 18–149 (EEGARLLASK…DRRFSPHFLD (132 aa)) are lumenal. N-linked (GlcNAc...) asparagine glycosylation is found at N88 and N104. A helical membrane pass occupies residues 150 to 169 (WAAFGVMTLPSIGIPLLLWY). Residues 170-183 (SSKRKYDTPKTKKN) lie on the Cytoplasmic side of the membrane.

The protein belongs to the TRAP-beta family. Heterotetramer of TRAP-alpha, TRAP-beta, TRAP-delta and TRAP-gamma. Interacts with STING1.

The protein resides in the endoplasmic reticulum membrane. TRAP proteins are part of a complex whose function is to bind calcium to the ER membrane and thereby regulate the retention of ER resident proteins. The polypeptide is Translocon-associated protein subunit beta (SSR2) (Homo sapiens (Human)).